Reading from the N-terminus, the 399-residue chain is Imidazolonepropionase (399 aa).

The Fe(3+) site is built by His-68 and His-70. Zn(2+) is bound by residues His-68 and His-70. The 4-imidazolone-5-propanoate site is built by Arg-77, Tyr-140, and His-173. Tyr-140 serves as a coordination point for N-formimidoyl-L-glutamate. Position 238 (His-238) interacts with Fe(3+). A Zn(2+)-binding site is contributed by His-238. Gln-241 contributes to the 4-imidazolone-5-propanoate binding site. Asp-313 lines the Fe(3+) pocket. Residue Asp-313 participates in Zn(2+) binding. Positions 315 and 317 each coordinate N-formimidoyl-L-glutamate. 4-imidazolone-5-propanoate is bound at residue Thr-318.

The protein belongs to the metallo-dependent hydrolases superfamily. HutI family. Zn(2+) is required as a cofactor. It depends on Fe(3+) as a cofactor.

Its subcellular location is the cytoplasm. The enzyme catalyses 4-imidazolone-5-propanoate + H2O = N-formimidoyl-L-glutamate. The protein operates within amino-acid degradation; L-histidine degradation into L-glutamate; N-formimidoyl-L-glutamate from L-histidine: step 3/3. Its function is as follows. Catalyzes the hydrolytic cleavage of the carbon-nitrogen bond in imidazolone-5-propanoate to yield N-formimidoyl-L-glutamate. It is the third step in the universal histidine degradation pathway. This is Imidazolonepropionase from Rhizorhabdus wittichii (strain DSM 6014 / CCUG 31198 / JCM 15750 / NBRC 105917 / EY 4224 / RW1) (Sphingomonas wittichii).